The chain runs to 624 residues: Ubiquitin carboxyl-terminal hydrolase 16 (624 aa).

A USP domain is found at V46–E620. C55 functions as the Nucleophile in the catalytic mechanism. The Proton acceptor role is filled by H424. A disordered region spans residues S453–A573. Residues S479–S496 are compositionally biased toward low complexity. Residues V518–D544 show a composition bias toward polar residues. Residues A546 to A573 show a composition bias toward low complexity.

This sequence belongs to the peptidase C19 family.

The enzyme catalyses Thiol-dependent hydrolysis of ester, thioester, amide, peptide and isopeptide bonds formed by the C-terminal Gly of ubiquitin (a 76-residue protein attached to proteins as an intracellular targeting signal).. This Emericella nidulans (strain FGSC A4 / ATCC 38163 / CBS 112.46 / NRRL 194 / M139) (Aspergillus nidulans) protein is Ubiquitin carboxyl-terminal hydrolase 16 (ubp16).